Here is a 161-residue protein sequence, read N- to C-terminus: MAGALCPGSFDPVTNGHLDVFTRAAAQFDEVVVTVMINPNKKGMFDVEERMELLRETTAHLPNVRVASWRGLLVDFAREQGITAIVKGLRDATDFGYELQMAQMNKKLSGVDTFFIATNPAFSFLSSSLVKEVATYGGDVSDMLPPVVHKRLLDRIAERRG.

Residue Ser-9 coordinates substrate. Residues 9-10 (SF) and His-17 each bind ATP. 3 residues coordinate substrate: Lys-41, Leu-73, and Lys-87. ATP-binding positions include 88–90 (GLR), Glu-98, and 122–128 (FSFLSSS).

Belongs to the bacterial CoaD family. As to quaternary structure, homohexamer. It depends on Mg(2+) as a cofactor.

It localises to the cytoplasm. It carries out the reaction (R)-4'-phosphopantetheine + ATP + H(+) = 3'-dephospho-CoA + diphosphate. Its pathway is cofactor biosynthesis; coenzyme A biosynthesis; CoA from (R)-pantothenate: step 4/5. Reversibly transfers an adenylyl group from ATP to 4'-phosphopantetheine, yielding dephospho-CoA (dPCoA) and pyrophosphate. The sequence is that of Phosphopantetheine adenylyltransferase from Nocardia farcinica (strain IFM 10152).